The following is a 579-amino-acid chain: F-box protein At5g39450 (579 aa).

The region spanning 16–62 (TCLLLSLPEDVIAVIARFVSPRDICNLSLCCKSLCDVVDSERIWLVQ) is the F-box domain.

This Arabidopsis thaliana (Mouse-ear cress) protein is F-box protein At5g39450.